The primary structure comprises 217 residues: Probable transaldolase (217 aa).

Residue K83 is the Schiff-base intermediate with substrate of the active site.

Belongs to the transaldolase family. Type 3B subfamily.

It localises to the cytoplasm. The enzyme catalyses D-sedoheptulose 7-phosphate + D-glyceraldehyde 3-phosphate = D-erythrose 4-phosphate + beta-D-fructose 6-phosphate. It functions in the pathway carbohydrate degradation; pentose phosphate pathway; D-glyceraldehyde 3-phosphate and beta-D-fructose 6-phosphate from D-ribose 5-phosphate and D-xylulose 5-phosphate (non-oxidative stage): step 2/3. Transaldolase is important for the balance of metabolites in the pentose-phosphate pathway. This is Probable transaldolase (tal) from Aquifex aeolicus (strain VF5).